The chain runs to 519 residues: Transcription factor STP1 (519 aa).

The i stretch occupies residues 16 to 35 (IPGKIYAFFRELVSGVIISK). Over residues 47-61 (ATKEEGKDAADEEKT) the composition is skewed to basic and acidic residues. Disordered regions lie at residues 47 to 69 (ATKEEGKDAADEEKTTTSLFPES) and 115 to 150 (LLGSRPEQDTGAPIKMSTGVTSSPLSPSGSTPEHST). Residues 65-97 (LFPESNNIDRSLNGGCSVIPCSMDVSDLNTPIS) form an II region. Positions 131 to 146 (STGVTSSPLSPSGSTP) are enriched in low complexity. The C2H2-type 1 zinc-finger motif lies at 160–182 (FICHYCDATFRIRGYLTRHIKKH). The C2H2-type 2; atypical zinc finger occupies 188 to 223 (YHCPFFNSATPPDLRCHNSGGFSRRDTYKTHLKARH). Residues 240–265 (GHCAQCGEYFSTIENFVENHIESGDC) form a C2H2-type 3; atypical zinc finger. The segment at 357–382 (IKKKQQQVSGSTVTTPEVATQNNQEV) is disordered. Positions 364–381 (VSGSTVTTPEVATQNNQE) are enriched in polar residues.

As to quaternary structure, interacts (via Region II) with SSY5; protease component of the SPS-sensor. In terms of processing, phosphorylated by casein kinase I. Phosphorylation is not dependent on the extracellular amino acid levels, but is a prerequisite for proteolytic processing. Post-translationally, activated by the amino acid-induced proteolytic removal of an N-terminal inhibitory domain by serine protease SSY5, an intrinsic component of the SPS-sensor. Processing requires at least 2 components of the SCF(GRR1) ubiquitin ligase complex, namely the F-box protein GRR1 and the E2 enzyme CDC34, but does not depend on the proteasome. Processing is negatively regulated by the protein phosphatase 2A regulatory subunit RTS1.

It is found in the cell membrane. The protein resides in the nucleus. Transcription factor involved in the regulation of gene expression in response to extracellular amino acid levels. Synthesized as latent cytoplasmic precursor, which, upon a signal initiated by the plasma membrane SPS (SSY1-PTR3-SSY5) amino acid sensor system, becomes proteolytically activated and relocates to the nucleus, where it induces the expression of SPS-sensor-regulated genes, including the amino-acid permeases AGP1, BAP2, BAP3 and GNP1. Binding to promoters is facilitated by DAL81. Involved in the repression of genes subject to nitrogen catabolite repression and genes involved in stress response. Negatively regulated by inner nuclear membrane proteins ASI1, ASI2 and ASI3, which prevent unprocessed precursor forms that escape cytoplasmic anchoring from inducing SPS-sensor-regulated genes. May be involved in pre-tRNA splicing. The sequence is that of Transcription factor STP1 (STP1) from Saccharomyces cerevisiae (strain RM11-1a) (Baker's yeast).